Reading from the N-terminus, the 135-residue chain is Nucleoside diphosphate kinase (135 aa).

Residues Lys-10, Phe-58, Arg-86, Thr-92, Arg-103, and Asn-113 each contribute to the ATP site. The active-site Pros-phosphohistidine intermediate is the His-116.

It belongs to the NDK family. Homotetramer. Mg(2+) is required as a cofactor.

Its subcellular location is the cytoplasm. The enzyme catalyses a 2'-deoxyribonucleoside 5'-diphosphate + ATP = a 2'-deoxyribonucleoside 5'-triphosphate + ADP. It catalyses the reaction a ribonucleoside 5'-diphosphate + ATP = a ribonucleoside 5'-triphosphate + ADP. Functionally, major role in the synthesis of nucleoside triphosphates other than ATP. The ATP gamma phosphate is transferred to the NDP beta phosphate via a ping-pong mechanism, using a phosphorylated active-site intermediate. The polypeptide is Nucleoside diphosphate kinase (Nocardioides sp. (strain ATCC BAA-499 / JS614)).